The sequence spans 254 residues: Cobalt transport protein CbiM (254 aa).

Residues 1-31 form the signal peptide; sequence MKTILRPFTLLSRSIFLALFVLFLWSPDAHA. Helical transmembrane passes span 37–57, 74–94, 106–126, 128–148, 169–189, and 212–232; these read GFLP…FLVV, LLLA…IPSV, LGAV…VLLF, ALLL…SMAI, WLAV…VTSL, and IFAL…VMVF.

Belongs to the CbiM family. In terms of assembly, forms an energy-coupling factor (ECF) transporter complex composed of an ATP-binding protein (A component, CbiO), a transmembrane protein (T component, CbiQ) and 2 possible substrate-capture proteins (S components, CbiM and CbiN) of unknown stoichimetry.

Its subcellular location is the cell inner membrane. It participates in cofactor biosynthesis; adenosylcobalamin biosynthesis. In terms of biological role, part of the energy-coupling factor (ECF) transporter complex CbiMNOQ involved in cobalt import. In Chlorobium limicola (strain DSM 245 / NBRC 103803 / 6330), this protein is Cobalt transport protein CbiM.